Reading from the N-terminus, the 173-residue chain is Peptidyl-prolyl cis-trans isomerase cyp3 (173 aa).

The 165-residue stretch at 8–172 (FMDIAIDGRL…SNVAIVECGE (165 aa)) folds into the PPIase cyclophilin-type domain.

Belongs to the cyclophilin-type PPIase family. PPIase H subfamily.

Its subcellular location is the cytoplasm. The protein localises to the cytoskeleton. It is found in the microtubule organizing center. The protein resides in the spindle pole body. It carries out the reaction [protein]-peptidylproline (omega=180) = [protein]-peptidylproline (omega=0). In terms of biological role, PPIases accelerate the folding of proteins. It catalyzes the cis-trans isomerization of proline imidic peptide bonds in oligopeptides. The polypeptide is Peptidyl-prolyl cis-trans isomerase cyp3 (cyp3) (Schizosaccharomyces pombe (strain 972 / ATCC 24843) (Fission yeast)).